The chain runs to 411 residues: Arginine deiminase (411 aa).

Cysteine 401 serves as the catalytic Amidino-cysteine intermediate.

The protein belongs to the arginine deiminase family.

It is found in the cytoplasm. It carries out the reaction L-arginine + H2O = L-citrulline + NH4(+). The protein operates within amino-acid degradation; L-arginine degradation via ADI pathway; carbamoyl phosphate from L-arginine: step 1/2. The protein is Arginine deiminase of Streptococcus equi subsp. zooepidemicus (strain MGCS10565).